We begin with the raw amino-acid sequence, 170 residues long: uncharacterized protein (170 aa).

This sequence belongs to the mimivirus L223/L227/L812 family.

This is an uncharacterized protein from Acanthamoeba polyphaga mimivirus (APMV).